We begin with the raw amino-acid sequence, 641 residues long: 1,3-beta-glucanosyltransferase PGA5 (641 aa).

Positions 1 to 23 (MTTLSTIWLFLITITAIFQLGLS) are cleaved as a signal peptide. N-linked (GlcNAc...) asparagine glycosylation is present at Asn25. Cys106 and Cys135 form a disulfide bridge. (1,3-beta-D-glucosyl)n contacts are provided by Tyr124, Asn192, Glu193, Asp234, and Arg239. Glu193 functions as the Proton donor in the catalytic mechanism. 6 disulfide bridges follow: Cys248–Cys390, Cys276–Cys307, Cys424–Cys474, Cys426–Cys528, Cys433–Cys498, and Cys451–Cys456. Residue Glu304 is the Nucleophile of the active site. Residue Tyr336 coordinates (1,3-beta-D-glucosyl)n. Residues 535–613 (KEEEKEVQEE…SPKTSKSIAG (79 aa)) form a disordered region. The segment covering 571-581 (KSKEKEKGKLI) has biased composition (basic and acidic residues). A compositionally biased stretch (acidic residues) spans 582 to 593 (EEEEEEEEEEEE). A compositionally biased stretch (polar residues) spans 596-610 (KTPSSGEKSPKTSKS). Asn621 carries N-linked (GlcNAc...) asparagine glycosylation. Asp622 carries GPI-anchor amidated aspartate lipidation. Residues 623 to 641 (SIWKTFIEILFTCSAAILI) constitute a propeptide, removed in mature form.

It belongs to the glycosyl hydrolase 72 family.

The protein resides in the cell membrane. Splits internally a 1,3-beta-glucan molecule and transfers the newly generated reducing end (the donor) to the non-reducing end of another 1,3-beta-glucan molecule (the acceptor) forming a 1,3-beta linkage, resulting in the elongation of 1,3-beta-glucan chains in the cell wall. Involved in spore wall assembly. The chain is 1,3-beta-glucanosyltransferase PGA5 (PGA5) from Candida albicans (strain SC5314 / ATCC MYA-2876) (Yeast).